Here is a 318-residue protein sequence, read N- to C-terminus: Acetyl-coenzyme A carboxylase carboxyl transferase subunit alpha (318 aa).

Positions 38–292 (KLEKRLAKLE…NKTITKSLHA (255 aa)) constitute a CoA carboxyltransferase C-terminal domain.

This sequence belongs to the AccA family. Acetyl-CoA carboxylase is a heterohexamer composed of biotin carboxyl carrier protein (AccB), biotin carboxylase (AccC) and two subunits each of ACCase subunit alpha (AccA) and ACCase subunit beta (AccD).

The protein resides in the cytoplasm. The enzyme catalyses N(6)-carboxybiotinyl-L-lysyl-[protein] + acetyl-CoA = N(6)-biotinyl-L-lysyl-[protein] + malonyl-CoA. Its pathway is lipid metabolism; malonyl-CoA biosynthesis; malonyl-CoA from acetyl-CoA: step 1/1. Its function is as follows. Component of the acetyl coenzyme A carboxylase (ACC) complex. First, biotin carboxylase catalyzes the carboxylation of biotin on its carrier protein (BCCP) and then the CO(2) group is transferred by the carboxyltransferase to acetyl-CoA to form malonyl-CoA. The chain is Acetyl-coenzyme A carboxylase carboxyl transferase subunit alpha from Listeria monocytogenes serovar 1/2a (strain ATCC BAA-679 / EGD-e).